Reading from the N-terminus, the 444-residue chain is Docking protein 3 (444 aa).

One can recognise a PH domain in the interval proline 7–phenylalanine 123. Residues aspartate 47–arginine 66 form a disordered region. Serine 138 is subject to Phosphoserine. The 105-residue stretch at glutamate 157 to leucine 261 folds into the IRS-type PTB domain. Phosphoserine occurs at positions 274, 308, and 314. Position 325 is a phosphotyrosine (tyrosine 325). Residues glycine 354–alanine 390 are disordered. Positions glycine 358–proline 376 are enriched in low complexity. The residue at position 371 (serine 371) is a Phosphoserine.

It belongs to the DOK family. Type A subfamily. On tyrosine phosphorylation, interacts with CSK and INPP5D/SHIP1 via their SH2 domains. Binds ABL1 through the PTB domain and in a kinase-dependent manner. Does not interact with RasGAP. In terms of processing, constitutively tyrosine-phosphorylated. On IL2 stimulation, phosphorylated on C-terminal tyrosine residues possibly by Src kinases. Can also be phosphorylated by ABL1 kinase.

The protein localises to the cytoplasm. The protein resides in the cell membrane. Its function is as follows. DOK proteins are enzymatically inert adaptor or scaffolding proteins. They provide a docking platform for the assembly of multimolecular signaling complexes. DOK3 is a negative regulator of JNK signaling in B-cells through interaction with INPP5D/SHIP1. May modulate ABL1 function. This Rattus norvegicus (Rat) protein is Docking protein 3 (Dok3).